Reading from the N-terminus, the 295-residue chain is 4-hydroxy-tetrahydrodipicolinate synthase (295 aa).

Thr-47 contributes to the pyruvate binding site. Catalysis depends on Tyr-135, which acts as the Proton donor/acceptor. The active-site Schiff-base intermediate with substrate is Lys-163. Position 204 (Ile-204) interacts with pyruvate.

It belongs to the DapA family. Homotetramer; dimer of dimers.

Its subcellular location is the cytoplasm. It carries out the reaction L-aspartate 4-semialdehyde + pyruvate = (2S,4S)-4-hydroxy-2,3,4,5-tetrahydrodipicolinate + H2O + H(+). It functions in the pathway amino-acid biosynthesis; L-lysine biosynthesis via DAP pathway; (S)-tetrahydrodipicolinate from L-aspartate: step 3/4. In terms of biological role, catalyzes the condensation of (S)-aspartate-beta-semialdehyde [(S)-ASA] and pyruvate to 4-hydroxy-tetrahydrodipicolinate (HTPA). This chain is 4-hydroxy-tetrahydrodipicolinate synthase, found in Caldicellulosiruptor bescii (strain ATCC BAA-1888 / DSM 6725 / KCTC 15123 / Z-1320) (Anaerocellum thermophilum).